Here is a 358-residue protein sequence, read N- to C-terminus: Uroporphyrinogen decarboxylase (358 aa).

Residues 28 to 32, aspartate 78, tyrosine 154, serine 208, and histidine 324 each bind substrate; that span reads RQAGR.

Belongs to the uroporphyrinogen decarboxylase family. In terms of assembly, homodimer.

The protein resides in the cytoplasm. The enzyme catalyses uroporphyrinogen III + 4 H(+) = coproporphyrinogen III + 4 CO2. Its pathway is porphyrin-containing compound metabolism; protoporphyrin-IX biosynthesis; coproporphyrinogen-III from 5-aminolevulinate: step 4/4. Its function is as follows. Catalyzes the decarboxylation of four acetate groups of uroporphyrinogen-III to yield coproporphyrinogen-III. The protein is Uroporphyrinogen decarboxylase of Acidiphilium cryptum (strain JF-5).